The primary structure comprises 64 residues: Alpha-toxin Amm5 (64 aa).

The 63-residue stretch at 2-64 (KDGYIIDDLN…VSIKEKGRCN (63 aa)) folds into the LCN-type CS-alpha/beta domain. Cystine bridges form between Cys-12–Cys-63, Cys-16–Cys-36, Cys-22–Cys-46, and Cys-26–Cys-48. Position 64 is an asparagine amide (Asn-64).

As to expression, expressed by the venom gland.

Its subcellular location is the secreted. Its function is as follows. Alpha toxins bind voltage-independently at site-3 of sodium channels (Nav) and inhibit the inactivation of the activated channels, thereby blocking neuronal transmission. This Androctonus mauritanicus mauritanicus (Scorpion) protein is Alpha-toxin Amm5.